Here is a 641-residue protein sequence, read N- to C-terminus: Calpain-6 (641 aa).

Residues 26–343 (LFCDPTFLPE…FHKLNVCRNV (318 aa)) form the Calpain catalytic domain. The tract at residues 344–495 (NNPIFGRKEL…IFSEVPVQLR (152 aa)) is domain III. Positions 498–621 (TLDMPKMSCW…YLRKKGGPTA (124 aa)) constitute a C2 domain.

It belongs to the peptidase C2 family. Interacts (via domain III) with microtubules. Interacts (via domain II) with ARHGEF2 (via the N-terminal zinc finger). As to expression, expressed only in placenta.

It localises to the cytoplasm. The protein localises to the perinuclear region. It is found in the cytoskeleton. The protein resides in the spindle. Its function is as follows. Microtubule-stabilizing protein that may be involved in the regulation of microtubule dynamics and cytoskeletal organization. May act as a regulator of RAC1 activity through interaction with ARHGEF2 to control lamellipodial formation and cell mobility. Does not seem to have protease activity as it has lost the active site residues. In Homo sapiens (Human), this protein is Calpain-6 (CAPN6).